The following is a 600-amino-acid chain: MSSISMHARPLNISAANNHHPSWDRRVSKPRRVAAKHLRLRLSCSLQLDGKPLDETRRSANYQPSAWDFNFIQSLHNQYKEDKYVTRHTELTAQVKMLLEEETDAVQQLDLIEDLKNLGINYLFKDKIQQILNHIYNQHRCFQNNQVEGNDLYFTALGFRLLRQHGFEVSQEVFDRFTNEEGTDFNPSLIDDTKGLLQLYEASFLLREGEDTLELARQFSTKLLQKKVDEDGDREVGDNLLVWIRHSLELPLHWRIHRIEARWFLDAYATRHDMNPIIFELAKLDFNITQATQQEELRDLSRWWNSAGLVEKLSFARDRVVESYFWAIGTLEPRQYGYQRKLVAKIIALISVVDDVYDIYGTLDELKLFTDVMRRWDAESFDQLPYYMKICYLIINNFIFELAYDILKDKGFNSLSYLQRSWLDVVEGYFTEAKWYYSGYTPNLEEYLKNAKITVTCPMILSQIYFTIASSIEKPELESMYKYHDILYLSGLLLRLPDDLGTALHELKRGDVPKAMQCYMKEKNVPEKEAREHVRFLIREASKQMNTVSAADCPFPDDFVAAAANLGRVANFVYVDGDGFGDQHSKMLQQIAALMFEPYD.

The segment at 1–26 (MSSISMHARPLNISAANNHHPSWDRR) is disordered. The N-terminal 31 residues, 1–31 (MSSISMHARPLNISAANNHHPSWDRRVSKPR), are a transit peptide targeting the chloroplast. Residues Asp354, Asp358, Asp498, and Glu506 each coordinate Mg(2+). The short motif at 354 to 358 (DDVYD) is the DDXXD motif element.

The protein belongs to the terpene synthase family. Tpsa subfamily. It depends on Mg(2+) as a cofactor. The cofactor is Mn(2+). In terms of tissue distribution, barely detectable in leaves.

Its subcellular location is the plastid. The protein localises to the chloroplast. The enzyme catalyses (2E)-geranyl diphosphate = alpha-pinene + diphosphate. Its pathway is secondary metabolite biosynthesis; terpenoid biosynthesis. In terms of biological role, monoterpene synthase involved in the biosynthesis of volatile compounds widely used in aromatherapy and folk medicine, and present in culinary herbs. Mediates the conversion of (2E)-geranyl diphosphate (GPP) into alpha-pinene and, as minor compounds, into alpha-phellandrene, limonene and alpha-terpinolene. The chain is Alpha pinene synthase, chloroplastic from Lavandula stoechas (Butterfly lavender).